Here is a 334-residue protein sequence, read N- to C-terminus: Formamidase (334 aa).

In terms of domain architecture, CN hydrolase spans 14 to 260 (MLMGLVQYPV…WEIVTAEVFP (247 aa)). E60 acts as the Proton acceptor in catalysis. The active-site Proton donor is the K133. The Nucleophile role is filled by C166.

This sequence belongs to the carbon-nitrogen hydrolase superfamily. Aliphatic amidase family.

The enzyme catalyses formamide + H2O = formate + NH4(+). Is an aliphatic amidase with a restricted substrate specificity, as it only hydrolyzes formamide. The polypeptide is Formamidase (Nitratidesulfovibrio vulgaris (strain DP4) (Desulfovibrio vulgaris)).